Reading from the N-terminus, the 84-residue chain is MNIFDFFRDRKKESTASVAKERLQIIVAHERGQRSTPDYLPALQKELVEVIRKYVNIESDQVQVALESQGSCSILELNITLPDR.

This sequence belongs to the MinE family.

In terms of biological role, prevents the cell division inhibition by proteins MinC and MinD at internal division sites while permitting inhibition at polar sites. This ensures cell division at the proper site by restricting the formation of a division septum at the midpoint of the long axis of the cell. This is Cell division topological specificity factor from Pseudomonas syringae pv. tomato (strain ATCC BAA-871 / DC3000).